A 392-amino-acid chain; its full sequence is uncharacterized protein (392 aa).

A mitochondrion-targeting transit peptide spans 1–34; it reads MCISSSSLLCGINSLKYASNRVGILIPPFQTASS. The next 8 membrane-spanning stretches (helical) occupy residues 115–135, 150–172, 185–205, 208–225, 277–297, 299–319, 321–341, and 350–370; these read VAIM…WHWD, FRFM…WWTL, LLVN…KFGV, ALSV…VALQ, ATFV…AVYA, AAIF…VYPV, AGIF…LNYE, and AHVS…PAMW. The active-site Nucleophile is the Ser-292. His-351 is an active-site residue.

The protein belongs to the peptidase S54 family.

It localises to the mitochondrion inner membrane. This is an uncharacterized protein from Schizosaccharomyces pombe (strain 972 / ATCC 24843) (Fission yeast).